The primary structure comprises 73 residues: SIFamide-related peptide (73 aa).

Positions 1–23 (MVSIRLTFALAIVAIIFAFSVDA) are cleaved as a signal peptide. The residue at position 35 (Phe35) is a Phenylalanine amide. Residues 39-73 (SNTMTDYEFTSRALSAICEVASETCTAWMSRQESN) constitute a propeptide that is removed on maturation.

Expressed in brain, the retrocerebral complex and in ventral, thoracic and abdominal ganglia (at protein level).

It localises to the secreted. This is SIFamide-related peptide from Camponotus floridanus (Florida carpenter ant).